We begin with the raw amino-acid sequence, 263 residues long: 4-hydroxy-tetrahydrodipicolinate reductase (263 aa).

An NAD(+)-binding site is contributed by 10-15 (GASGKM). Arginine 38 contributes to the NADP(+) binding site. NAD(+) is bound by residues 97–99 (GTT) and 123–126 (APNF). The active-site Proton donor/acceptor is the histidine 153. A (S)-2,3,4,5-tetrahydrodipicolinate-binding site is contributed by histidine 154. Lysine 157 acts as the Proton donor in catalysis. 163–164 (GT) is a binding site for (S)-2,3,4,5-tetrahydrodipicolinate.

Belongs to the DapB family.

It localises to the cytoplasm. The enzyme catalyses (S)-2,3,4,5-tetrahydrodipicolinate + NAD(+) + H2O = (2S,4S)-4-hydroxy-2,3,4,5-tetrahydrodipicolinate + NADH + H(+). The catalysed reaction is (S)-2,3,4,5-tetrahydrodipicolinate + NADP(+) + H2O = (2S,4S)-4-hydroxy-2,3,4,5-tetrahydrodipicolinate + NADPH + H(+). The protein operates within amino-acid biosynthesis; L-lysine biosynthesis via DAP pathway; (S)-tetrahydrodipicolinate from L-aspartate: step 4/4. Functionally, catalyzes the conversion of 4-hydroxy-tetrahydrodipicolinate (HTPA) to tetrahydrodipicolinate. In Dehalococcoides mccartyi (strain CBDB1), this protein is 4-hydroxy-tetrahydrodipicolinate reductase.